The sequence spans 124 residues: Anamorsin homolog (124 aa).

Polar residues predominate over residues 1–20; the sequence is MSSPAPSTSHNAANSTQAFS. Disordered stretches follow at residues 1 to 39 and 40 to 124; these read MSSP…EDRE and AKST…TDDI. The [2Fe-2S] cluster site is built by Cys49, Cys56, Cys59, and Cys61. The fe-S binding site A stretch occupies residues 49 to 61; that stretch reads CATRRRACKNCTC. Positions 86, 89, 97, and 100 each coordinate [4Fe-4S] cluster. 2 short sequence motifs (cx2C motif) span residues 86-89 and 97-100; these read CGNC and CAGC. The fe-S binding site B stretch occupies residues 86–100; sequence CGNCAKGDAFRCAGC.

It belongs to the anamorsin family. Monomer. The cofactor is [2Fe-2S] cluster. [4Fe-4S] cluster serves as cofactor.

It is found in the cytoplasm. The protein localises to the mitochondrion intermembrane space. Functionally, component of the cytosolic iron-sulfur (Fe-S) protein assembly (CIA) machinery. Required for the maturation of extramitochondrial Fe-S proteins. Part of an electron transfer chain functioning in an early step of cytosolic Fe-S biogenesis, facilitating the de novo assembly of a [4Fe-4S] cluster on the cytosolic Fe-S scaffold complex. Electrons are transferred from NADPH via a FAD- and FMN-containing diflavin oxidoreductase. Together with the diflavin oxidoreductase, also required for the assembly of the diferric tyrosyl radical cofactor of ribonucleotide reductase (RNR), probably by providing electrons for reduction during radical cofactor maturation in the catalytic small subunit. The polypeptide is Anamorsin homolog (Trypanosoma brucei brucei (strain 927/4 GUTat10.1)).